Consider the following 288-residue polypeptide: Ankyrin repeat and SOCS box protein 8 (288 aa).

Ser-17 is subject to Phosphoserine. ANK repeat units follow at residues 52-81 (GTLK…EVNA), 85-113 (YNRT…NPNA), 117-146 (NRDT…SVNA), and 150-179 (NNDT…EVRV). In terms of domain architecture, SOCS box spans 235–288 (QLCEKLTVLCSAPGTLKTLSRYAVRRSLGLQYLPDAVKGLPLPASLKEYLLLIE).

It belongs to the ankyrin SOCS box (ASB) family. As to quaternary structure, interacts with TBK1; this interaction promotes TBK1 proteasomal degradation. Post-translationally, phosphorylated by TBK1.

Its subcellular location is the cytoplasm. The protein operates within protein modification; protein ubiquitination. Functionally, may be a substrate-recognition component of a SCF-like ECS (Elongin-Cullin-SOCS-box protein) E3 ubiquitin-protein ligase complex which mediates the ubiquitination and subsequent proteasomal degradation of target proteins. Inhibits IFN-beta production through the IRF3 signaling pathway by targeting TBK1 via 'Lys-48'-linked ubiquitination, leading to its proteasomal degradation. This chain is Ankyrin repeat and SOCS box protein 8 (ASB8), found in Bos taurus (Bovine).